The sequence spans 594 residues: Adenine deaminase 1 (594 aa).

Belongs to the metallo-dependent hydrolases superfamily. Adenine deaminase family. Requires Mn(2+) as cofactor.

It catalyses the reaction adenine + H2O + H(+) = hypoxanthine + NH4(+). This Jannaschia sp. (strain CCS1) protein is Adenine deaminase 1.